The sequence spans 547 residues: Chaperonin GroEL (547 aa).

Residues 30–33, lysine 51, 87–91, glycine 415, and aspartate 495 each bind ATP; these read TLGP and DGTTT.

Belongs to the chaperonin (HSP60) family. As to quaternary structure, forms a cylinder of 14 subunits composed of two heptameric rings stacked back-to-back. Interacts with the co-chaperonin GroES.

The protein resides in the cytoplasm. The enzyme catalyses ATP + H2O + a folded polypeptide = ADP + phosphate + an unfolded polypeptide.. In terms of biological role, together with its co-chaperonin GroES, plays an essential role in assisting protein folding. The GroEL-GroES system forms a nano-cage that allows encapsulation of the non-native substrate proteins and provides a physical environment optimized to promote and accelerate protein folding. The polypeptide is Chaperonin GroEL (Pasteurella multocida (strain Pm70)).